The sequence spans 148 residues: MGGGERYNIPDRPAPKKSQPVSRGKQRSRDQNGVMHSAASGALGVPHHLRRGEKGTSYSWSPEARQAVSVDKKNGSVRFATPYDQNWESHLNKLLSAQCGQNYAGAKFSEPPSPSVLPKPPSHWVSLPMGDHRELMTFQLKSLLKVQA.

Positions 1–69 (MGGGERYNIP…WSPEARQAVS (69 aa)) are disordered. Positions 109-115 (SEPPSPS) match the SH3-binding motif.

It belongs to the PNRC family. PNRC2 subfamily.

The protein resides in the nucleus. It localises to the cytoplasm. Its subcellular location is the P-body. Functionally, involved in nonsense-mediated mRNA decay (NMD) by acting as a bridge between the mRNA decapping complex and the NMD machinery. May act by targeting the NMD machinery to the P-body and recruiting the decapping machinery to aberrant mRNAs. Required for upf1/rent1 localization to the P-body. Also acts as a nuclear receptor coactivator. This is Proline-rich nuclear receptor coactivator 2 (pnrc2) from Danio rerio (Zebrafish).